We begin with the raw amino-acid sequence, 200 residues long: dTTP/UTP pyrophosphatase (200 aa).

The Proton acceptor role is filled by Asp76.

Belongs to the Maf family. YhdE subfamily. A divalent metal cation is required as a cofactor.

It is found in the cytoplasm. It catalyses the reaction dTTP + H2O = dTMP + diphosphate + H(+). The enzyme catalyses UTP + H2O = UMP + diphosphate + H(+). Its function is as follows. Nucleoside triphosphate pyrophosphatase that hydrolyzes dTTP and UTP. May have a dual role in cell division arrest and in preventing the incorporation of modified nucleotides into cellular nucleic acids. In Acetivibrio thermocellus (strain ATCC 27405 / DSM 1237 / JCM 9322 / NBRC 103400 / NCIMB 10682 / NRRL B-4536 / VPI 7372) (Clostridium thermocellum), this protein is dTTP/UTP pyrophosphatase.